Reading from the N-terminus, the 197-residue chain is Rac-like GTP-binding protein ARAC11 (197 aa).

13 to 20 (GDGAVGKT) provides a ligand contact to GTP. The Effector region motif lies at 35–43 (YVPTVFDNF). GTP-binding positions include 60–64 (DTAGQ) and 118–121 (TKLD). At C194 the chain carries Cysteine methyl ester. The S-geranylgeranyl cysteine moiety is linked to residue C194. A propeptide spans 195–197 (SIL) (removed in mature form).

The protein belongs to the small GTPase superfamily. Rho family. Part of a complex containing ROPGEF1 and PRK2. Interacts with UGT1, ICR1, ICR2, ICR3, ICR4 and ICR5. Interacts with PHIP1 when activated by GTP. Exclusively expressed in mature pollen and pollen tubes.

It is found in the cytoplasm. Its subcellular location is the membrane. It catalyses the reaction GTP + H2O = GDP + phosphate + H(+). Its function is as follows. May be involved in cell polarity control during the actin-dependent tip growth of pollen tubes. May regulate callose synthase 1 (CALS1) activity through the interaction with UGT1. Inactive GDP-bound Rho GTPases reside in the cytosol, are found in a complex with Rho GDP-dissociation inhibitors (Rho GDIs), and are released from the GDI protein in order to translocate to membranes upon activation. The chain is Rac-like GTP-binding protein ARAC11 from Arabidopsis thaliana (Mouse-ear cress).